An 816-amino-acid chain; its full sequence is Mechanosensitive cation channel TMEM63B (816 aa).

Residues 1–46 (MLPYVIATLGSAGSTCKASTCSNSTKDYCYSARIRSTVLQGLPFGG) lie on the Extracellular side of the membrane. Residues 47–71 (VPTVLALDFMCFLALLFVFSILRKV) traverse the membrane as a helical segment. Residues Cys57 and Cys119 are each lipidated (S-palmitoyl cysteine). The Cytoplasmic segment spans residues 72–138 (AWDYGRLALV…KDDEIRDKCG (67 aa)). Residues 139–171 (GDAVHYLSFQRHIIGLLVAVGVLSVGIVLPVNF) form a helical membrane-spanning segment. Over 172–195 (SGDLLENNAYSFGRTTIANLNSGN) the chain is Extracellular. Residues 196 to 220 (NLLWLHTSFAFLYLLLTVYSMRRHT) form a helical membrane-spanning segment. The Cytoplasmic segment spans residues 221–420 (SKMRYKEDDL…IYWEHLSIRG (200 aa)). The segment at 224–419 (RYKEDDLVKR…NIYWEHLSIR (196 aa)) is intracellular linker IL2; confers mechanosensitivity. S-palmitoyl cysteine attachment occurs at residues Cys375 and Cys391. Residues 421–450 (FIWWIRCLVINVVLFILLFFLTTPAIIITT) form a helical membrane-spanning segment. Over 451-465 (MDKFNVTKPVEYLNN) the chain is Extracellular. The chain crosses the membrane as a helical span at residues 466 to 495 (PIITQFFPTLLLWCFSALLPTIVYYSAFFE). At 496 to 499 (AHWT) the chain is on the cytoplasmic side. A helical transmembrane segment spans residues 500 to 536 (RSGENRTTMHKCYTFLIFMVLLLPSLGLSSLDVFFRW). Residues 537-559 (LFDKKFLAEAAVRFECVFLPDNG) lie on the Extracellular side of the membrane. The helical transmembrane segment at 560-592 (AFFVNYVIASAFIGNAMDLLRIPGLLMYMIRLC) threads the bilayer. The segment at 560-592 (AFFVNYVIASAFIGNAMDLLRIPGLLMYMIRLC) is gating helix. Topologically, residues 593-612 (LARSAAERRNVKRHQAYEFQ) are cytoplasmic. The helical transmembrane segment at 613 to 631 (FGAAYAWMMCVFTVVMTYS) threads the bilayer. The Extracellular portion of the chain corresponds to 632–634 (ITC). A helical membrane pass occupies residues 635–659 (PIIVPFGLMYMLLKHLVDRYNLYYA). The Cytoplasmic segment spans residues 660–666 (YLPAKLD). Residues 667-695 (KKIHSGAVNQVVAAPILCLFWLLFFSTMR) form a helical membrane-spanning segment. The Extracellular segment spans residues 696–700 (TGFLA). Residues 701-721 (PTSMFTFVVLVITIVICLCHV) form a helical membrane-spanning segment. S-palmitoyl cysteine attachment occurs at residues Cys719 and Cys722. Over 722–816 (CFGHFKYLSA…DSLIENEIRQ (95 aa)) the chain is Cytoplasmic.

It belongs to the CSC1 (TC 1.A.17) family. Monomer. In terms of processing, palmitoylation is required for localization to the plasma membrane and stability.

Its subcellular location is the cell membrane. It localises to the lysosome membrane. It is found in the early endosome membrane. It carries out the reaction Ca(2+)(in) = Ca(2+)(out). It catalyses the reaction Mg(2+)(in) = Mg(2+)(out). The catalysed reaction is K(+)(in) = K(+)(out). The enzyme catalyses Na(+)(in) = Na(+)(out). It carries out the reaction Cs(+)(in) = Cs(+)(out). Its function is as follows. Mechanosensitive cation channel with low conductance and high activation threshold. Osmosensitive cation channel preferentially activated by hypotonic stress. Also acts as a phospholipid scramblase in response to changes in membrane structure: upon changes in membrane curvature and thickness, alters its conformation and translocates phospholipids, thereby controlling plasma membrane lipid distribution. This Gallus gallus (Chicken) protein is Mechanosensitive cation channel TMEM63B.